The following is a 46-amino-acid chain: Acetylajmalan esterase (46 aa).

The N-linked (GlcNAc...) asparagine glycan is linked to Asn39.

Belongs to the 'GDSL' lipolytic enzyme family.

The catalysed reaction is 17-O-acetylajmaline + H2O = ajmaline + acetate + H(+). It catalyses the reaction 17-O-acetylnorajmaline + H2O = norajmaline + acetate + H(+). Functionally, deacetylates 17-O-acetylajmaline and 17-O-acetylnorajmaline, but is inactive toward other acetylated alkaloids. This chain is Acetylajmalan esterase, found in Rauvolfia verticillata (Common devil-pepper).